Here is a 213-residue protein sequence, read N- to C-terminus: Protein PAE0745 (213 aa).

Residues 8–201 (EEGTFLVRLA…EKSPGGEVYE (194 aa)) form the AMMECR1 domain.

This Pyrobaculum aerophilum (strain ATCC 51768 / DSM 7523 / JCM 9630 / CIP 104966 / NBRC 100827 / IM2) protein is Protein PAE0745.